The sequence spans 622 residues: Glutamyl-tRNA(Gln) amidotransferase subunit E (622 aa).

Belongs to the GatB/GatE family. GatE subfamily. As to quaternary structure, heterodimer of GatD and GatE.

The catalysed reaction is L-glutamyl-tRNA(Gln) + L-glutamine + ATP + H2O = L-glutaminyl-tRNA(Gln) + L-glutamate + ADP + phosphate + H(+). Functionally, allows the formation of correctly charged Gln-tRNA(Gln) through the transamidation of misacylated Glu-tRNA(Gln) in organisms which lack glutaminyl-tRNA synthetase. The reaction takes place in the presence of glutamine and ATP through an activated gamma-phospho-Glu-tRNA(Gln). The GatDE system is specific for glutamate and does not act on aspartate. The chain is Glutamyl-tRNA(Gln) amidotransferase subunit E from Halobacterium salinarum (strain ATCC 29341 / DSM 671 / R1).